A 467-amino-acid polypeptide reads, in one-letter code: UDP-glycosyltransferase 71D1 (467 aa).

His-16 serves as the catalytic Proton acceptor. His-16 contributes to the an anthocyanidin binding site. Asp-122 functions as the Charge relay in the catalytic mechanism. Residues Thr-144, Gln-341, His-356, Trp-359, Asn-360, Ser-361, and Glu-364 each contribute to the UDP-alpha-D-glucose site. Ala-379 is an an anthocyanidin binding site. The UDP-alpha-D-glucose site is built by Glu-380 and Gln-381.

It belongs to the UDP-glycosyltransferase family.

The catalysed reaction is a flavonol + UDP-alpha-D-glucose = a flavonol 3-O-beta-D-glucoside + UDP + H(+). Functionally, possesses quercetin 3-O-glucosyltransferase activity in vitro. The chain is UDP-glycosyltransferase 71D1 (UGT71D1) from Arabidopsis thaliana (Mouse-ear cress).